The chain runs to 464 residues: Interstitial collagenase A (464 aa).

A signal peptide spans 1–17 (MPSLPLLLLLWAASSYS). The propeptide at 18–96 (FPVFHNGDRQ…PRCGVPDVAP (79 aa)) is activation peptide. Positions 87-94 (PRCGVPDV) match the Cysteine switch motif. Position 89 (Cys-89) interacts with Zn(2+). Residues 95–274 (APYAITHNNP…IQPTGATTPH (180 aa)) are metalloprotease. Asp-155 contributes to the Ca(2+) binding site. His-165 and Asp-167 together coordinate Zn(2+). Ca(2+) contacts are provided by Asp-172 and Gly-173. His-180 lines the Zn(2+) pocket. Residues Gly-187, Gly-189, and Asp-191 each coordinate Ca(2+). His-193 serves as a coordination point for Zn(2+). Ca(2+) contacts are provided by Asp-195 and Glu-198. Asn-202 carries an N-linked (GlcNAc...) asparagine glycan. His-215 lines the Zn(2+) pocket. The active site involves Glu-216. Zn(2+) is bound by residues His-219 and His-225. 2 Hemopexin repeats span residues 273 to 322 (PHPC…WPNL) and 323 to 369 (PVKL…FGFP). Cys-276 and Cys-464 are disulfide-bonded. Asp-283 is a binding site for Ca(2+). The N-linked (GlcNAc...) asparagine glycan is linked to Asn-371. Hemopexin repeat units lie at residues 372–420 (VTHI…FPGI) and 421–464 (DDKV…WFNC). Ca(2+) contacts are provided by Asp-376 and Asp-425.

The protein belongs to the peptidase M10A family. Ca(2+) serves as cofactor. It depends on Zn(2+) as a cofactor.

Its subcellular location is the secreted. The protein resides in the extracellular space. It localises to the extracellular matrix. The enzyme catalyses Cleavage of the triple helix of collagen at about three-quarters of the length of the molecule from the N-terminus, at 775-Gly-|-Ile-776 in the alpha1(I) chain. Cleaves synthetic substrates and alpha-macroglobulins at bonds where P1' is a hydrophobic residue.. With respect to regulation, can be activated without removal of the activation peptide. Functionally, cleaves collagens of types I, II, and III at one site in the helical domain. Also cleaves collagens of types VII and X. Able to degrade synthetic peptides and type I and II fibrillar collagen. The sequence is that of Interstitial collagenase A (Mmp1a) from Mus musculus (Mouse).